We begin with the raw amino-acid sequence, 300 residues long: Tyrosine recombinase XerC (300 aa).

Positions 2 to 88 constitute a Core-binding (CB) domain; that stretch reads ENVNFTLNLF…SLRSFYKFLL (87 aa). Residues 109–294 form the Tyr recombinase domain; it reads KIPHFLYPDE…TKDHLRYVYL (186 aa). Residues R149, K173, H246, R249, and H272 contribute to the active site. Residue Y281 is the O-(3'-phospho-DNA)-tyrosine intermediate of the active site.

Belongs to the 'phage' integrase family. XerC subfamily. Forms a cyclic heterotetrameric complex composed of two molecules of XerC and two molecules of XerD.

Its subcellular location is the cytoplasm. Site-specific tyrosine recombinase, which acts by catalyzing the cutting and rejoining of the recombining DNA molecules. The XerC-XerD complex is essential to convert dimers of the bacterial chromosome into monomers to permit their segregation at cell division. It also contributes to the segregational stability of plasmids. This is Tyrosine recombinase XerC from Anoxybacillus flavithermus (strain DSM 21510 / WK1).